Here is a 418-residue protein sequence, read N- to C-terminus: Transmembrane protease serine 11D (418 aa).

The Cytoplasmic segment spans residues M1–C20. Residues F21–L41 form a helical; Signal-anchor for type II membrane protein membrane-spanning segment. The Extracellular portion of the chain corresponds to A42–I418. The 118-residue stretch at K46–Q163 folds into the SEA domain. N144 carries N-linked (GlcNAc...) asparagine glycosylation. 4 disulfide bridges follow: C173-C292, C212-C228, C337-C353, and C364-C393. Residues I187–G417 enclose the Peptidase S1 domain. Active-site charge relay system residues include H227 and D272. The active-site Charge relay system is S368.

Belongs to the peptidase S1 family. As to quaternary structure, monomer. Located in the cells of the submucosal serous glands of the bronchi and trachea.

It is found in the cell membrane. The protein localises to the secreted. Its activity is regulated as follows. Strongly inhibited by diisopropyl fluorophosphate, leupeptin, antipain, aprotinin, and soybean trypsin inhibitor, but hardly inhibited by secretory leukocyte protease inhibitor at 10 microM. Its function is as follows. May play some biological role in the host defense system on the mucous membrane independently of or in cooperation with other substances in airway mucous or bronchial secretions. Plays a role in the proteolytic processing of ACE2. Proteolytically cleaves and activates the human coronavirus 229E (HCoV-229E) spike glycoprotein which facilitate virus-cell membrane fusions; spike proteins are synthesized and maintained in precursor intermediate folding states and proteolysis permits the refolding and energy release required to create stable virus-cell linkages and membrane coalescence. Preferentially cleaves the C-terminal side of arginine residues at the P1 position of certain peptides, cleaving Boc-Phe-Ser-Arg-4-methylcoumaryl-7-amide most efficiently and having an optimum pH of 8.6 with this substrate. In Homo sapiens (Human), this protein is Transmembrane protease serine 11D (TMPRSS11D).